The primary structure comprises 313 residues: Metaxin-3 (313 aa).

The segment at 280 to 313 (EKMDDNLRSSPQHRPHRHEAKPSAPASDRNSTPA) is disordered.

Belongs to the metaxin family. As to quaternary structure, part of a large protein complex spanning both mitochondrial membranes termed the mitochondrial intermembrane space bridging (MIB) complex.

It localises to the mitochondrion. The protein resides in the mitochondrion outer membrane. Its function is as follows. Could function in transport of proteins into the mitochondrion. The sequence is that of Metaxin-3 (mtx3) from Danio rerio (Zebrafish).